Reading from the N-terminus, the 291-residue chain is MALAALMIALGSLGLHTWQAQAVPILPLGLAPDTFDDTYVGCAEEMEEKAAPLLKEEMAHHALLRESWEAAQETWEDKRRGLTLPPGFKAQNGIAIMVYTNSSNTLYWELNQAVRTGGGSRELYMRHFPFKALHFYLIRALQLLRGSGGCSRGPGEVVFRGVGSLRFEPKRLGDSVRLGQFASSSLDKAVAHRFGNATLFSLTTCFGAPIQAFSVFPKEREVLIPPHEVFLVTRFSQDGAQSLVTLWSYNQTCSHFNCAYLGGEKRRGCVSAPGALGTGDLHMTKRHLQQP.

Positions 1–22 are cleaved as a signal peptide; sequence MALAALMIALGSLGLHTWQAQA. Cys-42 and Cys-258 are oxidised to a cystine. The TR mART core domain maps to 62-252; it reads ALLRESWEAA…LVTLWSYNQT (191 aa). Tyr-99 contacts NAD(+). The N-linked (GlcNAc...) asparagine glycan is linked to Asn-101. Arg-160 and Gln-180 together coordinate NAD(+). Arg-160 is an active-site residue. Residue Ser-183 is part of the active site. An N-linked (GlcNAc...) asparagine glycan is attached at Asn-196. An NAD(+)-binding site is contributed by Ser-214. Residue Glu-221 is part of the active site. N-linked (GlcNAc...) asparagine glycosylation occurs at Asn-250.

This sequence belongs to the Arg-specific ADP-ribosyltransferase family.

It localises to the secreted. The catalysed reaction is L-arginyl-[protein] + NAD(+) = N(omega)-(ADP-D-ribosyl)-L-arginyl-[protein] + nicotinamide + H(+). The sequence is that of Ecto-ADP-ribosyltransferase 5 (ART5) from Homo sapiens (Human).